We begin with the raw amino-acid sequence, 645 residues long: ATP-dependent DNA helicase Rep (645 aa).

A UvrD-like helicase ATP-binding domain is found at 1–280; sequence MSLNFSQKNA…IKMEHNYRSS (280 aa). Residues 22-29 and Arg-278 each bind ATP; that span reads AGAGSGKT. The 282-residue stretch at 281-562 folds into the UvrD-like helicase C-terminal domain; that stretch reads GRILKAANSL…QLMTLHASKG (282 aa).

It belongs to the helicase family. UvrD subfamily. In terms of assembly, homodimer.

It carries out the reaction Couples ATP hydrolysis with the unwinding of duplex DNA by translocating in the 3'-5' direction.. The catalysed reaction is ATP + H2O = ADP + phosphate + H(+). Rep helicase is a single-stranded DNA-dependent ATPase involved in DNA replication; it can initiate unwinding at a nick in the DNA. It binds to the single-stranded DNA and acts in a progressive fashion along the DNA in the 3' to 5' direction. The polypeptide is ATP-dependent DNA helicase Rep (Buchnera aphidicola subsp. Acyrthosiphon pisum (strain APS) (Acyrthosiphon pisum symbiotic bacterium)).